The primary structure comprises 81 residues: Costars family protein ABRACL (81 aa).

Met-1 bears the N-acetylmethionine mark.

It belongs to the costars family.

The sequence is that of Costars family protein ABRACL (Abracl) from Mus musculus (Mouse).